A 413-amino-acid polypeptide reads, in one-letter code: Arginine biosynthesis bifunctional protein ArgJ (413 aa).

Substrate-binding residues include T163, K189, T200, E286, N408, and T413. T200 (nucleophile) is an active-site residue.

Belongs to the ArgJ family. Heterotetramer of two alpha and two beta chains.

The protein localises to the cytoplasm. It catalyses the reaction N(2)-acetyl-L-ornithine + L-glutamate = N-acetyl-L-glutamate + L-ornithine. It carries out the reaction L-glutamate + acetyl-CoA = N-acetyl-L-glutamate + CoA + H(+). The protein operates within amino-acid biosynthesis; L-arginine biosynthesis; L-ornithine and N-acetyl-L-glutamate from L-glutamate and N(2)-acetyl-L-ornithine (cyclic): step 1/1. It participates in amino-acid biosynthesis; L-arginine biosynthesis; N(2)-acetyl-L-ornithine from L-glutamate: step 1/4. Functionally, catalyzes two activities which are involved in the cyclic version of arginine biosynthesis: the synthesis of N-acetylglutamate from glutamate and acetyl-CoA as the acetyl donor, and of ornithine by transacetylation between N(2)-acetylornithine and glutamate. In Staphylococcus aureus (strain Mu50 / ATCC 700699), this protein is Arginine biosynthesis bifunctional protein ArgJ.